The chain runs to 211 residues: Small ribosomal subunit protein uS3 (211 aa).

Residues 16–85 (IDEYFKGKLV…NPQIEVKPLE (70 aa)) form the KH type-2 domain.

It belongs to the universal ribosomal protein uS3 family. In terms of assembly, part of the 30S ribosomal subunit.

Its function is as follows. Binds the lower part of the 30S subunit head. The protein is Small ribosomal subunit protein uS3 of Methanococcus vannielii (strain ATCC 35089 / DSM 1224 / JCM 13029 / OCM 148 / SB).